The sequence spans 301 residues: Lipoyl synthase (301 aa).

[4Fe-4S] cluster is bound by residues cysteine 53, cysteine 58, cysteine 64, cysteine 79, cysteine 83, cysteine 86, and serine 290. The Radical SAM core domain maps to tryptophan 65–lysine 279.

This sequence belongs to the radical SAM superfamily. Lipoyl synthase family. Requires [4Fe-4S] cluster as cofactor.

It localises to the cytoplasm. It catalyses the reaction [[Fe-S] cluster scaffold protein carrying a second [4Fe-4S](2+) cluster] + N(6)-octanoyl-L-lysyl-[protein] + 2 oxidized [2Fe-2S]-[ferredoxin] + 2 S-adenosyl-L-methionine + 4 H(+) = [[Fe-S] cluster scaffold protein] + N(6)-[(R)-dihydrolipoyl]-L-lysyl-[protein] + 4 Fe(3+) + 2 hydrogen sulfide + 2 5'-deoxyadenosine + 2 L-methionine + 2 reduced [2Fe-2S]-[ferredoxin]. It participates in protein modification; protein lipoylation via endogenous pathway; protein N(6)-(lipoyl)lysine from octanoyl-[acyl-carrier-protein]: step 2/2. Its function is as follows. Catalyzes the radical-mediated insertion of two sulfur atoms into the C-6 and C-8 positions of the octanoyl moiety bound to the lipoyl domains of lipoate-dependent enzymes, thereby converting the octanoylated domains into lipoylated derivatives. This is Lipoyl synthase from Leptospira interrogans serogroup Icterohaemorrhagiae serovar Lai (strain 56601).